The chain runs to 442 residues: UPF0489 protein C5orf22 (442 aa).

The tract at residues S175–R210 is disordered. Positions N189–E200 are enriched in polar residues.

It belongs to the UPF0489 family.

This Homo sapiens (Human) protein is UPF0489 protein C5orf22 (C5orf22).